A 416-amino-acid chain; its full sequence is MRKLFLLGFIVAGLVLGNEANGYLEFNVTELDRIEDLEFGFSKFSSNFNPLMVGLTLIRGAGSKGAVCLDGTLPGYHLHRGHGSGANSWLIQLEGGGWCDNIRNCVYRKKSRRGSSNYMEKQIQFTGILSNKAQENPDFFNWNRVKLRYCDGGSFSGDSQNKAARLQFRGEKIWRAAMDDLKAKGMRNAKQALLSGCSAGGLAVILRCDEFRNLFSGWTRVKCLSDAGLFLDTPDVSGGHTIRNLYNGVVQLQGVKNNLPHLCTNHLNPTSCFFPQNLISQMKTPLFIVNAAYDIWQIQSSIAPPSADPSGYWHECRLNHGRCTPAQIRFLQGFRNQMLRAVSGFSNSKKNGLFINSCFAHCQTERQDTWFADDSPVIHKKAVAIAVGDWYFDRAEVKLIDCPYPCDRSCHNLVFR.

The N-terminal stretch at 1–20 is a signal peptide; sequence MRKLFLLGFIVAGLVLGNEA. Residue Asn27 is glycosylated (N-linked (GlcNAc...) asparagine). Catalysis depends on charge relay system residues Ser198, Asp294, and His361.

This sequence belongs to the pectinacetylesterase family.

It is found in the secreted. Its subcellular location is the cell wall. Hydrolyzes acetyl esters in homogalacturonan regions of pectin. In type I primary cell wall, galacturonic acid residues of pectin can be acetylated at the O-2 and O-3 positions. Decreasing the degree of acetylation of pectin gels in vitro alters their physical properties. This is Pectin acetylesterase 10 from Arabidopsis thaliana (Mouse-ear cress).